The following is an 811-amino-acid chain: Phenylalanine--tRNA ligase beta subunit (811 aa).

Residues 39 to 151 (RTWAAGVVVG…AGLQAGQPVG (113 aa)) form the tRNA-binding domain. The B5 domain occupies 409–495 (EPEHSITLRL…RLYGYDNFGE (87 aa)). Residues D473, D479, E482, and E483 each coordinate Mg(2+). An FDX-ACB domain is found at 717 to 810 (SSFPASDRDL…LVERFRVTLR (94 aa)).

The protein belongs to the phenylalanyl-tRNA synthetase beta subunit family. Type 1 subfamily. As to quaternary structure, tetramer of two alpha and two beta subunits. Requires Mg(2+) as cofactor.

It is found in the cytoplasm. The catalysed reaction is tRNA(Phe) + L-phenylalanine + ATP = L-phenylalanyl-tRNA(Phe) + AMP + diphosphate + H(+). The chain is Phenylalanine--tRNA ligase beta subunit from Synechococcus sp. (strain ATCC 27144 / PCC 6301 / SAUG 1402/1) (Anacystis nidulans).